The following is a 524-amino-acid chain: General transcription factor IIF subunit 1 (524 aa).

2 disordered regions span residues 56–76 (MYQEEEMPESGAGSEYNRKQR) and 181–462 (RLKD…IQLT). Residues 242-257 (KPQKKVPAKGGKKKKR) are compositionally biased toward basic residues. Over residues 262–289 (EALEDSDDGDFEGQEVDYMSDESSSDEE) the composition is skewed to acidic residues. The span at 290-307 (LPGKIKPAKEEEGPKGLD) shows a compositional bias: basic and acidic residues. Composition is skewed to acidic residues over residues 308-327 (EQSESSEESEEEKAEEEEGE) and 347-358 (SDESETSEDSDI). A compositionally biased stretch (basic residues) spans 368 to 378 (QKKKTPPKKDK). Residues 381 to 397 (GSNSSSRGNSRPGTPSP) are compositionally biased toward low complexity. Over residues 436-459 (PQNTSGKSTPQPQSGKSTPSSGDI) the composition is skewed to polar residues.

This sequence belongs to the TFIIF alpha subunit family. In terms of assembly, heterodimer of an alpha and a beta subunit. In terms of processing, phosphorylated on Ser and other residues by TAF1 and casein kinase II-like kinases.

It is found in the nucleus. Functionally, TFIIF is a general transcription initiation factor that binds to RNA polymerase II and helps to recruit it to the initiation complex in collaboration with TFIIB. It promotes transcription elongation. The polypeptide is General transcription factor IIF subunit 1 (gtf2f1) (Xenopus laevis (African clawed frog)).